The sequence spans 176 residues: Transcription termination/antitermination protein NusG (176 aa).

A KOW domain is found at 125–149 (GEVVRVVEGPFANFTATVEEYDVEH).

This sequence belongs to the NusG family.

In terms of biological role, participates in transcription elongation, termination and antitermination. The polypeptide is Transcription termination/antitermination protein NusG (Helicobacter pylori (strain J99 / ATCC 700824) (Campylobacter pylori J99)).